Here is a 447-residue protein sequence, read N- to C-terminus: MLNSIFIIFCLIAVSAFFSISEISLAASRKIKLKLLADEGSINAQRVLKMQENPGMFFTVVQIGLNAVAILGGIVGDAAFSPAFSALFSHYMSPELSEQLSFILSFSLVTGLFILFADLTPKRIGMIAPEAVALRIINPMRFCLFVFRPLVWLFNGMANNIFRLFKIPMVRKDDITSDDIYAVVEAGALAGVLRKQEHELIENVFELESRTVPSSMTSRESIIWFDLHEDEQSLKKKVAEHPHSKFLVCNEDIDHIIGYVDSKDLLNRVLANQSMALNSGVQIRNTLIVPDTLTLSEALESFKTAGEDFAVIMNEYALVVGIITLNDVMTTLMGDLVGQGLEEQIVARDENSWLVDGGTPIDDVMRVLDIDEFPQSGNYETIGGFMMFMLRKIPKRTDSVKFSGYKFEVVDIDNYRIDQLLVTRLDNKSNVPAPKLPDAQGKEDSAA.

At 1 to 4 (MLNS) the chain is on the cytoplasmic side. The CNNM transmembrane domain maps to 1 to 197 (MLNSIFIIFC…ALAGVLRKQE (197 aa)). The chain crosses the membrane as a helical span at residues 5 to 25 (IFIIFCLIAVSAFFSISEISL). At 26–54 (AASRKIKLKLLADEGSINAQRVLKMQENP) the chain is on the periplasmic side. Residues 55–75 (GMFFTVVQIGLNAVAILGGIV) traverse the membrane as a helical segment. Over 76–99 (GDAAFSPAFSALFSHYMSPELSEQ) the chain is Cytoplasmic. A helical transmembrane segment spans residues 100 to 120 (LSFILSFSLVTGLFILFADLT). Residues 121-141 (PKRIGMIAPEAVALRIINPMR) lie on the Periplasmic side of the membrane. A helical membrane pass occupies residues 142–162 (FCLFVFRPLVWLFNGMANNIF). Residues 163-447 (RLFKIPMVRK…DAQGKEDSAA (285 aa)) are Cytoplasmic-facing. 2 consecutive CBS domains span residues 216-275 (MTSR…NQSM) and 282-343 (QIRN…GLEE).

This sequence belongs to the UPF0053 family. PaeA subfamily.

Its subcellular location is the cell inner membrane. In terms of biological role, involved in cadaverine and putrescine tolerance in stationary phase. May facilitate the efflux of both cadaverine and putrescine from the cytoplasm, reducing potentially toxic levels under certain stress conditions. The polypeptide is Polyamine export protein (Salmonella typhimurium (strain 14028s / SGSC 2262)).